A 364-amino-acid polypeptide reads, in one-letter code: Dual-specificity RNA methyltransferase RlmN (364 aa).

The Proton acceptor role is filled by E91. The Radical SAM core domain occupies 97–333; sequence ESDRGTLCIS…VTVRKTRGDD (237 aa). Cysteines 104 and 338 form a disulfide. [4Fe-4S] cluster contacts are provided by C111, C115, and C118. S-adenosyl-L-methionine is bound by residues 164–165, S196, 218–220, and N295; these read GE and SLH. C338 acts as the S-methylcysteine intermediate in catalysis.

This sequence belongs to the radical SAM superfamily. RlmN family. [4Fe-4S] cluster serves as cofactor.

It localises to the cytoplasm. It catalyses the reaction adenosine(2503) in 23S rRNA + 2 reduced [2Fe-2S]-[ferredoxin] + 2 S-adenosyl-L-methionine = 2-methyladenosine(2503) in 23S rRNA + 5'-deoxyadenosine + L-methionine + 2 oxidized [2Fe-2S]-[ferredoxin] + S-adenosyl-L-homocysteine. It carries out the reaction adenosine(37) in tRNA + 2 reduced [2Fe-2S]-[ferredoxin] + 2 S-adenosyl-L-methionine = 2-methyladenosine(37) in tRNA + 5'-deoxyadenosine + L-methionine + 2 oxidized [2Fe-2S]-[ferredoxin] + S-adenosyl-L-homocysteine. In terms of biological role, specifically methylates position 2 of adenine 2503 in 23S rRNA and position 2 of adenine 37 in tRNAs. m2A2503 modification seems to play a crucial role in the proofreading step occurring at the peptidyl transferase center and thus would serve to optimize ribosomal fidelity. This is Dual-specificity RNA methyltransferase RlmN from Neisseria meningitidis serogroup B (strain ATCC BAA-335 / MC58).